We begin with the raw amino-acid sequence, 145 residues long: Large ribosomal subunit protein uL16 (145 aa).

The segment covering 1–17 (MLMPKRVKHRRVHRGRM) has biased composition (basic residues). The tract at residues 1 to 22 (MLMPKRVKHRRVHRGRMTGKAT) is disordered.

This sequence belongs to the universal ribosomal protein uL16 family. As to quaternary structure, part of the 50S ribosomal subunit.

Its function is as follows. Binds 23S rRNA and is also seen to make contacts with the A and possibly P site tRNAs. This Ruminiclostridium cellulolyticum (strain ATCC 35319 / DSM 5812 / JCM 6584 / H10) (Clostridium cellulolyticum) protein is Large ribosomal subunit protein uL16.